A 1905-amino-acid polypeptide reads, in one-letter code: MRRWWGALLLGALLCAHGIASSLECACGRSHFTCAVSALGECTCIPAQWQCDGDNDCGDHSDEDGCTLPTCSPLDFHCDNGKCIRRSWVCDGDNDCEDDSDEQDCPPRECEEDEFPCQNGYCIRSLWHCDGDNDCGDNSDEQCDMRKCSDKEFRCSDGSCIAEHWYCDGDTDCKDGSDEESCPSAVPSPPCNLEEFQCAYGRCILDIYHCDGDDDCGDWSDESDCSSHQPCRSGEFMCDSGLCINSGWRCDGDADCDDQSDERNCTTSMCTAEQFRCRSGRCVRLSWRCDGEDDCADNSDEENCENTGSPQCASDQFLCWNGRCIGQRKLCNGINDCGDSSDESPQQNCRPRTGEENCNVNNGGCAQKCQMVRGAVQCTCHTGYRLTEDGRTCQDVNECAEEGYCSQGCTNTEGAFQCWCEAGYELRPDRRSCKALGPEPVLLFANRIDIRQVLPHRSEYTLLLNNLENAIALDFHHRRELVFWSDVTLDRILRANLNGSNVEEVVSTGLESPGGLAVDWVHDKLYWTDSGTSRIEVANLDGAHRKVLLWQSLEKPRAIALHPMEGTIYWTDWGNTPRIEASSMDGSGRRIIADTHLFWPNGLTIDYAGRRMYWVDAKHHVIERANLDGSHRKAVISQGLPHPFAITVFEDSLYWTDWHTKSINSANKFTGKNQEIIRNKLHFPMDIHTLHPQRQPAGKNRCGDNNGGCTHLCLPSGQNYTCACPTGFRKINSHACAQSLDKFLLFARRMDIRRISFDTEDLSDDVIPLADVRSAVALDWDSRDDHVYWTDVSTDTISRAKWDGTGQEVVVDTSLESPAGLAIDWVTNKLYWTDAGTDRIEVANTDGSMRTVLIWENLDRPRDIVVEPMGGYMYWTDWGASPKIERAGMDASSRQVIISSNLTWPNGLAIDYGSQRLYWADAGMKTIEFAGLDGSKRKVLIGSQLPHPFGLTLYGQRIYWTDWQTKSIQSADRLTGLDRETLQENLENLMDIHVFHRQRPPVTTLCAVENGGCSHLCLRSPNPSGFSCTCPTGINLLRDGKTCSPGMNSFLIFARRIDVRMVSLDIPYFADVVVPINMTMKNTIAIGVDPLEGKVYWSDSTLHRISRASLDGSQHEDIITTGLQTTDGLAVDAIGRKVYWTDTGTNRIEVGNLDGSMRKVLVWQNLDSPRAIVLYHEMGFMYWTDWGENAKLERSGMDGSDRTVLINNNLGWPNGLTVDKTSSQLLWADAHTERIEVADLNGANRHTLVSPVQHPYGLTLLDSYIYWTDWQTRSIHRADKSTGSNVILVRSNLPGLMDIQAVDRAQPLGFNKCGSRNGGCSHLCLPRPSGFSCACPTGIQLKGDRKTCDPSPETYLLFSSRGSIRRISLDTDDHTDVHVPVPGLNNVISLDYDSVHGKVYYTDVFLDVIRRADLNGSNMETVIGHGLKTTDGLAVDWVARNLYWTDTGRNTIEASRLDGSCRKVLINNSLDEPRAIAVFPRKGYLFWTDWGHIAKIERANLDGSERKVLINTDLGWPNGLTLDYDTRRIYWVDAHLDRIESADLNGKLRQVLVSHVSHPFALTQQDRWIYWTDWQTKSIQRVDKYSGRNKETVLANVEGLMDIIVVSPQRQTGTNACGVNNGGCTHLCFARASDFVCACPDEPDGHPCSLVPGLVPPAPRATSMNEKSPVLPNTLPTTLHSSTTKTRTSLEGAGGRCSERDAQLGLCAHSNEAVPAAPGEGLHVSYAIGGLLSILLILLVIAALMLYRHRKSKFTDPGMGNLTYSNPSYRTSTQEVKLEAAPKPAVYNQLCYKKEGGPDHSYTKEKIKIVEGIRLLAGDDAEWGDLKQLRSSRGGLLRDHVCMKTDTVSIQASSGSLDDTETEQLLQEEQSECSSVHTAATPERRGSLPDTGWKHERKLSSESQV.

The signal sequence occupies residues 1–20; sequence MRRWWGALLLGALLCAHGIA. At 21-1725 the chain is on the extracellular side; it reads SSLECACGRS…AAPGEGLHVS (1705 aa). LDL-receptor class A domains are found at residues 26–67, 70–106, 109–144, 147–183, 190–226, 230–266, 269–305, and 311–350; these read ACGR…DGCT, TCSP…QDCP, ECEE…EQCD, KCSD…ESCP, PCNL…SDCS, PCRS…RNCT, MCTA…ENCE, and QCAS…QNCR. Cystine bridges form between Cys-27–Cys-44, Cys-34–Cys-57, Cys-51–Cys-66, Cys-71–Cys-83, Cys-78–Cys-96, Cys-90–Cys-105, Cys-110–Cys-122, Cys-117–Cys-135, Cys-129–Cys-143, Cys-148–Cys-160, Cys-155–Cys-173, Cys-167–Cys-182, Cys-191–Cys-203, Cys-198–Cys-216, Cys-210–Cys-225, Cys-231–Cys-243, Cys-238–Cys-256, Cys-250–Cys-265, Cys-270–Cys-282, Cys-277–Cys-295, Cys-289–Cys-304, Cys-312–Cys-324, Cys-319–Cys-337, Cys-331–Cys-349, Cys-358–Cys-369, Cys-365–Cys-378, Cys-380–Cys-393, Cys-399–Cys-409, Cys-405–Cys-418, and Cys-420–Cys-433. A glycan (N-linked (GlcNAc...) asparagine) is linked at Asn-264. Residues 354–394 form the EGF-like 1; atypical domain; it reads GEENCNVNNGGCAQKCQMVRGAVQCTCHTGYRLTEDGRTCQ. The 40-residue stretch at 395–434 folds into the EGF-like 2; calcium-binding domain; sequence DVNECAEEGYCSQGCTNTEGAFQCWCEAGYELRPDRRSCK. LDL-receptor class B repeat units lie at residues 480-522, 523-565, 566-609, 610-652, and 653-693; these read ELVF…DWVH, DKLY…HPME, GTIY…DYAG, RRMY…FEDS, and LYWT…LHPQ. A glycan (N-linked (GlcNAc...) asparagine) is linked at Asn-498. Residues 698–737 enclose the EGF-like 3 domain; sequence GKNRCGDNNGGCTHLCLPSGQNYTCACPTGFRKINSHACA. Intrachain disulfides connect Cys-702–Cys-713, Cys-709–Cys-722, and Cys-724–Cys-736. Residue Asn-719 is glycosylated (N-linked (GlcNAc...) asparagine). LDL-receptor class B repeat units follow at residues 785–827, 828–870, 871–914, 915–956, and 957–998; these read DHVY…DWVT, NKLY…EPMG, GYMY…DYGS, QRLY…LYGQ, and RIYW…FHRQ. N-linked (GlcNAc...) asparagine glycosylation occurs at Asn-901. The N-linked (GlcNAc...) asparagine glycan is linked to Asn-1077. LDL-receptor class B repeat units follow at residues 1093–1135, 1136–1178, 1179–1222, 1223–1263, 1264–1306, 1397–1439, 1440–1482, 1483–1526, 1527–1568, and 1569–1610; these read GKVY…DAIG, RKVY…YHEM, GFMY…DKTS, SQLL…LLDS, YIYW…DRAQ, GKVY…DWVA, RNLY…FPRK, GYLF…DYDT, RRIY…QDRW, and IYWT…SPQR. N-linked (GlcNAc...) asparagine glycosylation is found at Asn-1415 and Asn-1467. The segment at 1661–1696 is disordered; the sequence is ATSMNEKSPVLPNTLPTTLHSSTTKTRTSLEGAGGR. The segment covering 1674 to 1690 has biased composition (low complexity); sequence TLPTTLHSSTTKTRTSL. Residues 1726 to 1746 traverse the membrane as a helical segment; that stretch reads YAIGGLLSILLILLVIAALML. Residues 1747 to 1905 are Cytoplasmic-facing; the sequence is YRHRKSKFTD…ERKLSSESQV (159 aa). Positions 1852–1905 are disordered; the sequence is ASSGSLDDTETEQLLQEEQSECSSVHTAATPERRGSLPDTGWKHERKLSSESQV. Residues 1882–1905 show a composition bias toward basic and acidic residues; sequence PERRGSLPDTGWKHERKLSSESQV.

This sequence belongs to the LDLR family. In terms of assembly, homooligomer. Interacts with MUSK; the heterodimer forms an AGRIN receptor complex that binds AGRIN resulting in activation of MUSK. Interacts (via the extracellular domain) with SOST; the interaction facilitates the inhibition of Wnt signaling. Interacts with MESD; the interaction promotes glycosylation of LRP4 and its cell-surface expression. N-glycosylation is required for cell surface location.

Its subcellular location is the cell membrane. Its function is as follows. Mediates SOST-dependent inhibition of bone formation. Functions as a specific facilitator of SOST-mediated inhibition of Wnt signaling. Plays a key role in the formation and the maintenance of the neuromuscular junction (NMJ), the synapse between motor neuron and skeletal muscle. Directly binds AGRIN and recruits it to the MUSK signaling complex. Mediates the AGRIN-induced phosphorylation of MUSK, the kinase of the complex. The activation of MUSK in myotubes induces the formation of NMJ by regulating different processes including the transcription of specific genes and the clustering of AChR in the postsynaptic membrane. Alternatively, may be involved in the negative regulation of the canonical Wnt signaling pathway, being able to antagonize the LRP6-mediated activation of this pathway. More generally, has been proposed to function as a cell surface endocytic receptor binding and internalizing extracellular ligands for degradation by lysosomes. Plays an essential role in the process of digit differentiation. The sequence is that of Low-density lipoprotein receptor-related protein 4 (Lrp4) from Mus musculus (Mouse).